The following is an 84-amino-acid chain: U8-theraphotoxin-Hhn1c 3 (84 aa).

The N-terminal stretch at 1–21 is a signal peptide; sequence MKVALIVCLVWVMAMMELVSC. 5 disulfide bridges follow: Cys-23-Cys-35, Cys-29-Cys-44, Cys-34-Cys-67, Cys-54-Cys-75, and Cys-69-Cys-81.

This sequence belongs to the AVIT (prokineticin) family. As to expression, expressed by the venom gland.

The protein localises to the secreted. In Cyriopagopus hainanus (Chinese bird spider), this protein is U8-theraphotoxin-Hhn1c 3.